We begin with the raw amino-acid sequence, 477 residues long: Angiotensinogen (477 aa).

An N-terminal signal peptide occupies residues 1–24 (MTPTGAGLKATIFCILTWVSLTAG). Cys42 and Cys161 are joined by a disulfide. 2 N-linked (GlcNAc...) asparagine glycosylation sites follow: Asn295 and Asn319.

It belongs to the serpin family. Post-translationally, in response to low blood pressure, the enzyme renin/REN cleaves angiotensinogen to produce angiotensin-1. Angiotensin-1 is a substrate of ACE (angiotensin converting enzyme) that removes a dipeptide to yield the physiologically active peptide angiotensin-2. Angiotensin-1 and angiotensin-2 can be further processed to generate angiotensin-3, angiotensin-4. Angiotensin 1-9 is cleaved from angiotensin-1 by ACE2 and can be further processed by ACE to produce angiotensin 1-7, angiotensin 1-5 and angiotensin 1-4. Angiotensin 1-7 has also been proposed to be cleaved from angiotensin-2 by ACE2 or from angiotensin-1 by MME (neprilysin). The disulfide bond is labile. Angiotensinogen is present in the circulation in a near 40:60 ratio with the oxidized disulfide-bonded form, which preferentially interacts with receptor-bound renin.

It localises to the secreted. Functionally, essential component of the renin-angiotensin system (RAS), a potent regulator of blood pressure, body fluid and electrolyte homeostasis. Acts directly on vascular smooth muscle as a potent vasoconstrictor, affects cardiac contractility and heart rate through its action on the sympathetic nervous system, and alters renal sodium and water absorption through its ability to stimulate the zona glomerulosa cells of the adrenal cortex to synthesize and secrete aldosterone. Acts by binding to angiotensin receptors AGTR1 and AGTR2. Also binds the DEAR/FBXW7-AS1 receptor. Its function is as follows. Stimulates aldosterone release. In terms of biological role, is a ligand for the G-protein coupled receptor MAS1. Has vasodilator and antidiuretic effects. Has an antithrombotic effect that involves MAS1-mediated release of nitric oxide from platelets. The protein is Angiotensinogen (Agt) of Rattus norvegicus (Rat).